The chain runs to 319 residues: Beta-ketoacyl-[acyl-carrier-protein] synthase III (319 aa).

Active-site residues include Cys113 and His246. The interval Gln247–Arg251 is ACP-binding. Asn276 is an active-site residue.

It belongs to the thiolase-like superfamily. FabH family. Homodimer.

It is found in the cytoplasm. It carries out the reaction malonyl-[ACP] + acetyl-CoA + H(+) = 3-oxobutanoyl-[ACP] + CO2 + CoA. It participates in lipid metabolism; fatty acid biosynthesis. Functionally, catalyzes the condensation reaction of fatty acid synthesis by the addition to an acyl acceptor of two carbons from malonyl-ACP. Catalyzes the first condensation reaction which initiates fatty acid synthesis and may therefore play a role in governing the total rate of fatty acid production. Possesses both acetoacetyl-ACP synthase and acetyl transacylase activities. Its substrate specificity determines the biosynthesis of branched-chain and/or straight-chain of fatty acids. The sequence is that of Beta-ketoacyl-[acyl-carrier-protein] synthase III from Ehrlichia chaffeensis (strain ATCC CRL-10679 / Arkansas).